A 432-amino-acid polypeptide reads, in one-letter code: Adenylosuccinate synthetase (432 aa).

GTP-binding positions include 11–17 and 39–41; these read GDEGKGK and GHT. Residue aspartate 12 is the Proton acceptor of the active site. Mg(2+)-binding residues include aspartate 12 and glycine 39. IMP is bound by residues 12–15, 37–40, threonine 134, arginine 148, asparagine 230, threonine 245, and arginine 309; these read DEGK and NAGH. Histidine 40 acts as the Proton donor in catalysis. Position 305–311 (305–311) interacts with substrate; the sequence is VTTGRKR. GTP-binding positions include arginine 311, 337–339, and 419–421; these read KLD and GTG.

The protein belongs to the adenylosuccinate synthetase family. In terms of assembly, homodimer. Mg(2+) serves as cofactor.

Its subcellular location is the cytoplasm. It carries out the reaction IMP + L-aspartate + GTP = N(6)-(1,2-dicarboxyethyl)-AMP + GDP + phosphate + 2 H(+). It functions in the pathway purine metabolism; AMP biosynthesis via de novo pathway; AMP from IMP: step 1/2. In terms of biological role, plays an important role in the de novo pathway and in the salvage pathway of purine nucleotide biosynthesis. Catalyzes the first committed step in the biosynthesis of AMP from IMP. This chain is Adenylosuccinate synthetase, found in Kluyveromyces lactis (strain ATCC 8585 / CBS 2359 / DSM 70799 / NBRC 1267 / NRRL Y-1140 / WM37) (Yeast).